A 139-amino-acid polypeptide reads, in one-letter code: Sec-independent protein translocase protein TatB (139 aa).

A helical membrane pass occupies residues 1 to 21 (MFDMGFLELMLIGVVALLVLG). Basic and acidic residues predominate over residues 66–86 (QQRKLDAGLGKVRDEVERHGD). Residues 66-139 (QQRKLDAGLG…APSAKDSNAP (74 aa)) form a disordered region.

The protein belongs to the TatB family. The Tat system comprises two distinct complexes: a TatABC complex, containing multiple copies of TatA, TatB and TatC subunits, and a separate TatA complex, containing only TatA subunits. Substrates initially bind to the TatABC complex, which probably triggers association of the separate TatA complex to form the active translocon.

It is found in the cell inner membrane. Its function is as follows. Part of the twin-arginine translocation (Tat) system that transports large folded proteins containing a characteristic twin-arginine motif in their signal peptide across membranes. Together with TatC, TatB is part of a receptor directly interacting with Tat signal peptides. TatB may form an oligomeric binding site that transiently accommodates folded Tat precursor proteins before their translocation. The protein is Sec-independent protein translocase protein TatB of Chromohalobacter salexigens (strain ATCC BAA-138 / DSM 3043 / CIP 106854 / NCIMB 13768 / 1H11).